We begin with the raw amino-acid sequence, 336 residues long: Gibberellin 2-beta-dioxygenase 7 (336 aa).

In terms of domain architecture, Fe2OG dioxygenase spans 191–291; sequence LENSFLRLNK…RMSIAFFVCP (101 aa). Fe cation is bound by residues His216, Asp218, and His272. The active site involves Arg282. 2-oxoglutarate is bound at residue Arg282.

It belongs to the iron/ascorbate-dependent oxidoreductase family. GA2OX subfamily. The cofactor is Fe(2+).

The enzyme catalyses gibberellin A1 + 2-oxoglutarate + O2 = gibberellin A8 + succinate + CO2. Its pathway is plant hormone biosynthesis; gibberellin biosynthesis. Its function is as follows. Catalyzes the 2-beta-hydroxylation of gibberellins (GA) precursors, rendering them unable to be converted to active GAs. Hydroxylates the C20-GA GA12 and GA53, but is not active on C19-GAs, like GA1, GA4, GA9 and GA20. In Arabidopsis thaliana (Mouse-ear cress), this protein is Gibberellin 2-beta-dioxygenase 7 (GA2OX7).